Reading from the N-terminus, the 718-residue chain is Cyclomaltodextrin glucanotransferase (718 aa).

Positions 1–34 are cleaved as a signal peptide; sequence MFQMAKRVLLSTTLTFSLLAGSALPFLPASAIYA. The interval 35–172 is A1; that stretch reads DADTAVTNKQ…GIKIIIDFAP (138 aa). Positions 61, 63, 66, and 67 each coordinate Ca(2+). A disulfide bond links cysteine 77 and cysteine 84. Ca(2+) contacts are provided by glycine 85 and aspartate 87. 134-135 serves as a coordination point for substrate; sequence YW. Asparagine 173 serves as a coordination point for Ca(2+). The interval 173–236 is b; sequence NHTSPAMETD…NLYDLADLNH (64 aa). Substrate is bound at residue histidine 174. A Ca(2+)-binding site is contributed by isoleucine 224. 227–230 is a binding site for substrate; the sequence is NLYD. Position 233 (aspartate 233) interacts with Ca(2+). Positions 237–440 are A2; the sequence is NNSTIDTYFK…LRKSNPAIAY (204 aa). Arginine 261 serves as a coordination point for substrate. Residue aspartate 263 is the Nucleophile of the active site. Substrate is bound at residue 266 to 267; the sequence is KH. Histidine 267 serves as a coordination point for Ca(2+). Glutamate 291 serves as the catalytic Proton donor. Substrate contacts are provided by histidine 361, aspartate 405, and arginine 409. A c region spans residues 441 to 528; that stretch reads GSTQQRWINN…ATAVWQYTAS (88 aa). The interval 529 to 614 is d; it reads ETTPTIGHVG…SNAYNDFTIL (86 aa). Residues 532 to 612 enclose the IPT/TIG domain; the sequence is PTIGHVGPVM…VNSNAYNDFT (81 aa). A CBM20 domain is found at 613-718; sequence ILSGDQVSVR…GTATVTINWQ (106 aa). The segment at 615–718 is e; it reads SGDQVSVRFV…GTATVTINWQ (104 aa).

This sequence belongs to the glycosyl hydrolase 13 family. Monomer. It depends on Ca(2+) as a cofactor.

Its subcellular location is the secreted. The catalysed reaction is Cyclizes part of a (1-&gt;4)-alpha-D-glucan chain by formation of a (1-&gt;4)-alpha-D-glucosidic bond.. This is Cyclomaltodextrin glucanotransferase (cgtA) from Bacillus licheniformis.